Here is a 436-residue protein sequence, read N- to C-terminus: Carboxypeptidase A5 (436 aa).

Residues 1-33 (MQGTPGGGTRPGPSPVDRRTLLVFSFILAAALG) form the signal peptide. The propeptide at 34–126 (QMNFTGDQVL…ERQAMAKSRR (93 aa)) is activation peptide. Residues 138–431 (SYHTLEEIYS…MALRTIMEHT (294 aa)) form the Peptidase M14 domain. Residues His-196 and Glu-199 each contribute to the Zn(2+) site. Residues 196–199 (HSRE), Arg-254, and 271–272 (NR) contribute to the substrate site. Cysteines 265 and 288 form a disulfide. Residue His-323 coordinates Zn(2+). Residues 324-325 (SY) and Tyr-375 each bind substrate. Glu-397 acts as the Proton donor/acceptor in catalysis.

It belongs to the peptidase M14 family. Zn(2+) serves as cofactor. In terms of tissue distribution, expression is very low or not detectable.

The protein resides in the secreted. The chain is Carboxypeptidase A5 (CPA5) from Homo sapiens (Human).